Consider the following 301-residue polypeptide: Nodulation protein D 3 (301 aa).

Residues 6–63 (LDLNLLVVLDALLTARNLTAAASSINLSQPAMSAAVARLRNYFNDELFTMSGRERVLT) form the HTH lysR-type domain. Positions 23-43 (LTAAASSINLSQPAMSAAVAR) form a DNA-binding region, H-T-H motif.

It belongs to the LysR transcriptional regulatory family.

Its function is as follows. NodD regulates the expression of the nodABCFE genes which encode other nodulation proteins. NodD is also a negative regulator of its own expression. Binds flavonoids as inducers. The sequence is that of Nodulation protein D 3 (nodD3) from Mesorhizobium japonicum (strain LMG 29417 / CECT 9101 / MAFF 303099) (Mesorhizobium loti (strain MAFF 303099)).